Here is a 375-residue protein sequence, read N- to C-terminus: Succinyl-diaminopimelate desuccinylase (375 aa).

Zn(2+) is bound at residue His66. Asp68 is an active-site residue. Residue Asp99 participates in Zn(2+) binding. Glu133 (proton acceptor) is an active-site residue. 3 residues coordinate Zn(2+): Glu134, Glu162, and His348.

The protein belongs to the peptidase M20A family. DapE subfamily. As to quaternary structure, homodimer. It depends on Zn(2+) as a cofactor. Co(2+) serves as cofactor.

The enzyme catalyses N-succinyl-(2S,6S)-2,6-diaminopimelate + H2O = (2S,6S)-2,6-diaminopimelate + succinate. It functions in the pathway amino-acid biosynthesis; L-lysine biosynthesis via DAP pathway; LL-2,6-diaminopimelate from (S)-tetrahydrodipicolinate (succinylase route): step 3/3. Catalyzes the hydrolysis of N-succinyl-L,L-diaminopimelic acid (SDAP), forming succinate and LL-2,6-diaminopimelate (DAP), an intermediate involved in the bacterial biosynthesis of lysine and meso-diaminopimelic acid, an essential component of bacterial cell walls. The sequence is that of Succinyl-diaminopimelate desuccinylase from Salmonella agona (strain SL483).